A 54-amino-acid polypeptide reads, in one-letter code: UPF0391 membrane protein Aave_3864 (54 aa).

2 helical membrane-spanning segments follow: residues A5–A25 and V28–L48.

This sequence belongs to the UPF0391 family.

It is found in the cell membrane. The protein is UPF0391 membrane protein Aave_3864 of Paracidovorax citrulli (strain AAC00-1) (Acidovorax citrulli).